Here is a 94-residue protein sequence, read N- to C-terminus: MAFGTEPIPTGLADPPIDDLMEHADSKYALAIFAAKRARQINSYFTQLNEGLLQNVGPLVEYKSQEKPLSIAFREINEGLLEETLGEDDLSEGN.

This sequence belongs to the RNA polymerase subunit omega family. As to quaternary structure, the RNAP catalytic core consists of 2 alpha, 1 beta, 1 beta' and 1 omega subunit. When a sigma factor is associated with the core the holoenzyme is formed, which can initiate transcription.

It catalyses the reaction RNA(n) + a ribonucleoside 5'-triphosphate = RNA(n+1) + diphosphate. Promotes RNA polymerase assembly. Latches the N- and C-terminal regions of the beta' subunit thereby facilitating its interaction with the beta and alpha subunits. The polypeptide is DNA-directed RNA polymerase subunit omega (Bifidobacterium animalis subsp. lactis (strain AD011)).